Here is a 248-residue protein sequence, read N- to C-terminus: Probable transcriptional regulatory protein MCA1220 (248 aa).

This sequence belongs to the TACO1 family.

The protein localises to the cytoplasm. The polypeptide is Probable transcriptional regulatory protein MCA1220 (Methylococcus capsulatus (strain ATCC 33009 / NCIMB 11132 / Bath)).